We begin with the raw amino-acid sequence, 388 residues long: Succinate--CoA ligase [ADP-forming] subunit beta (388 aa).

The ATP-grasp domain occupies 9–244; that stretch reads KEILRKFGVA…LDEEDPAEIE (236 aa). Residues Lys46, 53–55, Glu99, Ala102, and Glu107 each bind ATP; that span reads GRG. Asn199 and Asp213 together coordinate Mg(2+). Residues Asn264 and 321-323 each bind substrate; that span reads GIM.

Belongs to the succinate/malate CoA ligase beta subunit family. As to quaternary structure, heterotetramer of two alpha and two beta subunits. Mg(2+) serves as cofactor.

The enzyme catalyses succinate + ATP + CoA = succinyl-CoA + ADP + phosphate. It carries out the reaction GTP + succinate + CoA = succinyl-CoA + GDP + phosphate. The protein operates within carbohydrate metabolism; tricarboxylic acid cycle; succinate from succinyl-CoA (ligase route): step 1/1. Succinyl-CoA synthetase functions in the citric acid cycle (TCA), coupling the hydrolysis of succinyl-CoA to the synthesis of either ATP or GTP and thus represents the only step of substrate-level phosphorylation in the TCA. The beta subunit provides nucleotide specificity of the enzyme and binds the substrate succinate, while the binding sites for coenzyme A and phosphate are found in the alpha subunit. This is Succinate--CoA ligase [ADP-forming] subunit beta from Burkholderia mallei (strain NCTC 10247).